The primary structure comprises 345 residues: N-acetyl-gamma-glutamyl-phosphate reductase (345 aa).

C149 is a catalytic residue.

Belongs to the NAGSA dehydrogenase family. Type 1 subfamily.

Its subcellular location is the cytoplasm. It carries out the reaction N-acetyl-L-glutamate 5-semialdehyde + phosphate + NADP(+) = N-acetyl-L-glutamyl 5-phosphate + NADPH + H(+). It functions in the pathway amino-acid biosynthesis; L-arginine biosynthesis; N(2)-acetyl-L-ornithine from L-glutamate: step 3/4. Catalyzes the NADPH-dependent reduction of N-acetyl-5-glutamyl phosphate to yield N-acetyl-L-glutamate 5-semialdehyde. The polypeptide is N-acetyl-gamma-glutamyl-phosphate reductase (Bacillus cereus (strain B4264)).